The chain runs to 55 residues: MPSSKKKKETVPVMSMAGLIRYYEEENEKVKISPKIVIGASLALTIIVIVITKLF.

Residues 1 to 33 lie on the Cytoplasmic side of the membrane; it reads MPSSKKKKETVPVMSMAGLIRYYEEENEKVKIS. A helical transmembrane segment spans residues 34 to 53; that stretch reads PKIVIGASLALTIIVIVITK. Topologically, residues 54-55 are extracellular; it reads LF.

This sequence belongs to the SEC61-beta family. Component of the protein translocase complex. Heterotrimer consisting of alpha (SecY), beta (SecG) and gamma (SecE) subunits. Can form oligomers of the heterotrimer.

It localises to the cell membrane. Involved in protein export. The function of the beta subunit is unknown, but it may be involved in stabilization of the trimeric complex. This Saccharolobus solfataricus (strain ATCC 35092 / DSM 1617 / JCM 11322 / P2) (Sulfolobus solfataricus) protein is Preprotein translocase subunit SecG (secG).